The following is a 302-amino-acid chain: Ornithine carbamoyltransferase (302 aa).

Residues 52–55 (STRT), Q79, R103, and 130–133 (HPCQ) contribute to the carbamoyl phosphate site. L-ornithine is bound by residues N161, D221, and 225–226 (SM). Residues 261-262 (CL) and R289 each bind carbamoyl phosphate.

This sequence belongs to the aspartate/ornithine carbamoyltransferase superfamily. OTCase family.

It is found in the cytoplasm. The catalysed reaction is carbamoyl phosphate + L-ornithine = L-citrulline + phosphate + H(+). It participates in amino-acid biosynthesis; L-arginine biosynthesis; L-arginine from L-ornithine and carbamoyl phosphate: step 1/3. Its function is as follows. Reversibly catalyzes the transfer of the carbamoyl group from carbamoyl phosphate (CP) to the N(epsilon) atom of ornithine (ORN) to produce L-citrulline. In Methanosarcina mazei (strain ATCC BAA-159 / DSM 3647 / Goe1 / Go1 / JCM 11833 / OCM 88) (Methanosarcina frisia), this protein is Ornithine carbamoyltransferase.